We begin with the raw amino-acid sequence, 185 residues long: MISVNDFRTGLTISVDNALWQVMDFQHVKPGKGAAFVRSKLRNLRTGSVQEKTFRAGEKVEKAHIENRRMQYLYASGESHVFMDNETYEQIELGENQIERELKFLKENMGVSIMTYQDEVLGVELPNTVELTVSETEPGIKGDTASNVTKPAKLETGLVVQVPIFINEGEMLIINTGEGKYVSRA.

This sequence belongs to the elongation factor P family.

Its subcellular location is the cytoplasm. It functions in the pathway protein biosynthesis; polypeptide chain elongation. Involved in peptide bond synthesis. Stimulates efficient translation and peptide-bond synthesis on native or reconstituted 70S ribosomes in vitro. Probably functions indirectly by altering the affinity of the ribosome for aminoacyl-tRNA, thus increasing their reactivity as acceptors for peptidyl transferase. This is Elongation factor P from Bacillus mycoides (strain KBAB4) (Bacillus weihenstephanensis).